A 104-amino-acid chain; its full sequence is MSAIQGIEGVISQLQATAMSARAQDSLPQPTISFAGQLHAALDRISDTQTAARTQAEKFTLGEPGVALNDVMTDMQKASVSMQMGIQVRNKLVAAYQEVMSMQV.

The protein belongs to the FliE family.

The protein resides in the bacterial flagellum basal body. This chain is Flagellar hook-basal body complex protein FliE, found in Escherichia coli (strain SE11).